Reading from the N-terminus, the 149-residue chain is Down syndrome critical region protein 9 (149 aa).

A disordered region spans residues 1-41 (MGRICPVNSRARRLRARPGRPSGDSLPYHQLQGGAPRLWSP).

As to expression, testis specific.

In Homo sapiens (Human), this protein is Down syndrome critical region protein 9 (DSCR9).